We begin with the raw amino-acid sequence, 323 residues long: tRNA N6-adenosine threonylcarbamoyltransferase (323 aa).

2 residues coordinate Fe cation: His110 and His114. Substrate contacts are provided by residues 131 to 135, Asp164, Gly177, and Asn264; that span reads VASGG. Asp288 contributes to the Fe cation binding site.

This sequence belongs to the KAE1 / TsaD family. The cofactor is Fe(2+).

The protein localises to the cytoplasm. The enzyme catalyses L-threonylcarbamoyladenylate + adenosine(37) in tRNA = N(6)-L-threonylcarbamoyladenosine(37) in tRNA + AMP + H(+). Functionally, required for the formation of a threonylcarbamoyl group on adenosine at position 37 (t(6)A37) in tRNAs that read codons beginning with adenine. Is involved in the transfer of the threonylcarbamoyl moiety of threonylcarbamoyl-AMP (TC-AMP) to the N6 group of A37, together with TsaE and TsaB. TsaD likely plays a direct catalytic role in this reaction. The polypeptide is tRNA N6-adenosine threonylcarbamoyltransferase (Thermus thermophilus (strain ATCC BAA-163 / DSM 7039 / HB27)).